The chain runs to 839 residues: Heat shock 70 kDa protein 4L (839 aa).

Phosphoserine is present on residues S74 and S508. The span at L503–G554 shows a compositional bias: basic and acidic residues. Residues L503–R567 are disordered. A Phosphothreonine modification is found at T545. At S579 the chain carries Phosphoserine. Residue T761 is modified to Phosphothreonine. The tract at residues I786–D839 is disordered. 2 stretches are compositionally biased toward basic and acidic residues: residues P791 to S804 and T818 to D839.

It belongs to the heat shock protein 70 family. Homodimer.

The protein localises to the cytoplasm. Its subcellular location is the nucleus. Possesses chaperone activity in vitro where it inhibits aggregation of citrate synthase. The protein is Heat shock 70 kDa protein 4L (HSPA4L) of Homo sapiens (Human).